Consider the following 152-residue polypeptide: Sec-independent protein translocase protein TatB (152 aa).

The helical transmembrane segment at 1 to 21 (MFDVAPSELLLVAVVALVVIG) threads the bilayer. Over residues 60–71 (EDMEKRWAEENA) the composition is skewed to basic and acidic residues. The interval 60 to 152 (EDMEKRWAEE…KEADQQEKQS (93 aa)) is disordered. Low complexity-rich tracts occupy residues 84–98 (TAST…PVSD) and 124–140 (AANH…STPA). Residues 141-152 (KPKEADQQEKQS) are compositionally biased toward basic and acidic residues.

This sequence belongs to the TatB family. In terms of assembly, the Tat system comprises two distinct complexes: a TatABC complex, containing multiple copies of TatA, TatB and TatC subunits, and a separate TatA complex, containing only TatA subunits. Substrates initially bind to the TatABC complex, which probably triggers association of the separate TatA complex to form the active translocon.

The protein resides in the cell inner membrane. Its function is as follows. Part of the twin-arginine translocation (Tat) system that transports large folded proteins containing a characteristic twin-arginine motif in their signal peptide across membranes. Together with TatC, TatB is part of a receptor directly interacting with Tat signal peptides. TatB may form an oligomeric binding site that transiently accommodates folded Tat precursor proteins before their translocation. The chain is Sec-independent protein translocase protein TatB from Zymomonas mobilis subsp. mobilis (strain ATCC 31821 / ZM4 / CP4).